The following is a 456-amino-acid chain: Peripherin (456 aa).

Residues 1–14 (MSHSGLRSTSTSYR) are compositionally biased toward polar residues. Residues 1-55 (MSHSGLRSTSTSYRRTLGSSPVPSSYSSSSRLSTSRHFGSPSPGPSSRSSSSAFR) are disordered. The interval 1–90 (MSHSGLRSTS…FLTTRSNEKA (90 aa)) is head. Low complexity predominate over residues 16 to 55 (TLGSSPVPSSYSSSSRLSTSRHFGSPSPGPSSRSSSSAFR). Positions 88–397 (EKAELQELND…KLLEGEESRI (310 aa)) constitute an IF rod domain. Positions 91–123 (ELQELNDRFASFIEKVRYLEQQNAVLVTEINQA) are coil 1A. Residues 124 to 134 (RSKEPTRASDL) form a linker 1 region. Residues 135-230 (CQQELRELRK…KLHEEELNDV (96 aa)) are coil 1B. The segment at 231–252 (QVSVQAQPVHMEIEAAKQPDLT) is linker 2. The tract at residues 253-395 (SALRDIRSQY…YRKLLEGEES (143 aa)) is coil 2. The interval 396–456 (RIAVPIHSLT…RKEQSSEGEK (61 aa)) is tail. The segment at 411 to 456 (SPAAPEIDPSTETHTRKTVAIKTIETRDGEQVVTESRKEQSSEGEK) is disordered. Positions 434–456 (IETRDGEQVVTESRKEQSSEGEK) are enriched in basic and acidic residues.

The protein belongs to the intermediate filament family. As to quaternary structure, forms homodimers (in vitro). Homopolymerizes into a filamentous network (in vitro).

Its subcellular location is the cytoplasm. The protein resides in the cytoskeleton. It localises to the cell projection. It is found in the axon. The protein localises to the perikaryon. Functionally, class-III neuronal intermediate filament protein. My form an independent structural network without the involvement of other neurofilaments or may cooperate with other neuronal intermediate filament proteins to form a filamentous network. In Xenopus laevis (African clawed frog), this protein is Peripherin (prph).